The chain runs to 287 residues: 4-hydroxybenzoate octaprenyltransferase (287 aa).

The next 7 helical transmembrane spans lie at 23-40, 99-119, 141-161, 163-183, 213-233, 235-255, and 266-286; these read IGSL…WLAG, LFVV…TMTI, LPQF…YAAV, ESLP…TVAY, LIIG…GTMT, LGMP…YQQI, and FKAF…VLFG.

The protein belongs to the UbiA prenyltransferase family. It depends on Mg(2+) as a cofactor.

The protein localises to the cell inner membrane. The enzyme catalyses all-trans-octaprenyl diphosphate + 4-hydroxybenzoate = 4-hydroxy-3-(all-trans-octaprenyl)benzoate + diphosphate. It functions in the pathway cofactor biosynthesis; ubiquinone biosynthesis. Its function is as follows. Catalyzes the prenylation of para-hydroxybenzoate (PHB) with an all-trans polyprenyl group. Mediates the second step in the final reaction sequence of ubiquinone-8 (UQ-8) biosynthesis, which is the condensation of the polyisoprenoid side chain with PHB, generating the first membrane-bound Q intermediate 3-octaprenyl-4-hydroxybenzoate. The polypeptide is 4-hydroxybenzoate octaprenyltransferase (Pectobacterium carotovorum subsp. carotovorum (strain PC1)).